The sequence spans 129 residues: NADPH-dependent 7-cyano-7-deazaguanine reductase (129 aa).

Catalysis depends on Cys-43, which acts as the Thioimide intermediate. Asp-50 serves as the catalytic Proton donor. Substrate is bound by residues 65–67 and 84–85; these read VEL and HE.

The protein belongs to the GTP cyclohydrolase I family. QueF type 1 subfamily.

It localises to the cytoplasm. The enzyme catalyses 7-aminomethyl-7-carbaguanine + 2 NADP(+) = 7-cyano-7-deazaguanine + 2 NADPH + 3 H(+). It functions in the pathway tRNA modification; tRNA-queuosine biosynthesis. Its function is as follows. Catalyzes the NADPH-dependent reduction of 7-cyano-7-deazaguanine (preQ0) to 7-aminomethyl-7-deazaguanine (preQ1). The polypeptide is NADPH-dependent 7-cyano-7-deazaguanine reductase (Aquifex aeolicus (strain VF5)).